The primary structure comprises 298 residues: MYIPIITGGKSKEREISLTSAKNVFNSISNLGYKPVILDLIDDDFINKIQNYKFAFNVVHGDYGEDGRLPSLLEILGIDYTCSNPETCIATYDKFIFYSLFKNYIQMPQTTLTNKLILPPFEYPFIIKPRKSGSSKGVYIIHNENEYKFYLEKDLKEFQEVLVQEYIKGREITISYIQKNEEFILLPILEIIPKKEFYDYEAKYTNGLTELKPQLNSPEKIIQKINEIGNHVMQTLTFKDMFRIDAILKDDEVYVLEINTVPGLTELSDLPTSALAAGISFDELINIIIKNHVARVAG.

Residues 97 to 290 (FYSLFKNYIQ…FDELINIIIK (194 aa)) enclose the ATP-grasp domain. 124–173 (PFIIKPRKSGSSKGVYIIHNENEYKFYLEKDLKEFQEVLVQEYIKGREIT) serves as a coordination point for ATP. Mg(2+) contacts are provided by D245, E257, and N259.

This sequence belongs to the D-alanine--D-alanine ligase family. Mg(2+) serves as cofactor. It depends on Mn(2+) as a cofactor.

The protein resides in the cytoplasm. It catalyses the reaction 2 D-alanine + ATP = D-alanyl-D-alanine + ADP + phosphate + H(+). The protein operates within cell wall biogenesis; peptidoglycan biosynthesis. Its function is as follows. Cell wall formation. In Petrotoga mobilis (strain DSM 10674 / SJ95), this protein is D-alanine--D-alanine ligase.